The primary structure comprises 347 residues: Probable dual-specificity RNA methyltransferase RlmN (347 aa).

Glu-90 serves as the catalytic Proton acceptor. The Radical SAM core domain occupies 96 to 326 (YKHGNSICIS…VTVRREMGSD (231 aa)). An intrachain disulfide couples Cys-103 to Cys-331. Residues Cys-110, Cys-114, and Cys-117 each coordinate [4Fe-4S] cluster. S-adenosyl-L-methionine is bound by residues 157–158 (GE), Ser-189, 212–214 (SLH), and Asn-288. Cys-331 (S-methylcysteine intermediate) is an active-site residue.

This sequence belongs to the radical SAM superfamily. RlmN family. Requires [4Fe-4S] cluster as cofactor.

The protein resides in the cytoplasm. It catalyses the reaction adenosine(2503) in 23S rRNA + 2 reduced [2Fe-2S]-[ferredoxin] + 2 S-adenosyl-L-methionine = 2-methyladenosine(2503) in 23S rRNA + 5'-deoxyadenosine + L-methionine + 2 oxidized [2Fe-2S]-[ferredoxin] + S-adenosyl-L-homocysteine. It carries out the reaction adenosine(37) in tRNA + 2 reduced [2Fe-2S]-[ferredoxin] + 2 S-adenosyl-L-methionine = 2-methyladenosine(37) in tRNA + 5'-deoxyadenosine + L-methionine + 2 oxidized [2Fe-2S]-[ferredoxin] + S-adenosyl-L-homocysteine. Specifically methylates position 2 of adenine 2503 in 23S rRNA and position 2 of adenine 37 in tRNAs. The polypeptide is Probable dual-specificity RNA methyltransferase RlmN (Clostridium botulinum (strain Eklund 17B / Type B)).